The primary structure comprises 523 residues: Sialate O-acetylesterase (523 aa).

Residues 1-23 form the signal peptide; it reads MVAPGLVLGLVLPLILWADRSAG. N-linked (GlcNAc...) asparagine glycans are attached at residues asparagine 107, asparagine 138, asparagine 267, asparagine 290, asparagine 401, and asparagine 422.

Widely expressed with high expression in the testis, prostate, and colon.

It localises to the lysosome. The protein localises to the cytoplasm. The enzyme catalyses N-acetyl-9-O-acetylneuraminate + H2O = N-acetylneuraminate + acetate + H(+). The catalysed reaction is an Ac-O-9-sialoglycoconjugate + H2O = a sialoglycoconjugate + acetate + H(+). In terms of biological role, catalyzes the removal of O-acetyl ester groups from position 9 of the free diacetylated sialate N-acetyl-9-O-acetylneuraminate (Neu5,9Ac2) in the cytosol and of the diacetylated sialate residues of sialylglycoconjugates in the lysosomes. Together with the sialate-O-acetyltransferase they regulate the balance of acetylated sialoglycoconjugates, key players in various processes such as cell-cell interactions, host-pathogen recognition, and tumor antigenicity. This chain is Sialate O-acetylesterase (SIAE), found in Homo sapiens (Human).